The sequence spans 179 residues: Large ribosomal subunit protein uL6 (179 aa).

It belongs to the universal ribosomal protein uL6 family. Part of the 50S ribosomal subunit.

This protein binds to the 23S rRNA, and is important in its secondary structure. It is located near the subunit interface in the base of the L7/L12 stalk, and near the tRNA binding site of the peptidyltransferase center. This Clostridium perfringens (strain ATCC 13124 / DSM 756 / JCM 1290 / NCIMB 6125 / NCTC 8237 / Type A) protein is Large ribosomal subunit protein uL6.